We begin with the raw amino-acid sequence, 230 residues long: Cytochrome b6-f complex iron-sulfur subunit, chloroplastic (230 aa).

Residues 1–16 (MASTTLSATPTPSQLS) are compositionally biased toward low complexity. The disordered stretch occupies residues 1–20 (MASTTLSATPTPSQLSAAKN). Residues 1–56 (MASTTLSATPTPSQLSAAKNGAYSPSRALLGKTARGLYPEKEMVSRKVTCQATSIP) constitute a chloroplast transit peptide. Residues 73 to 93 (LLGALSLPTAGMLIPYGAFFV) traverse the membrane as a helical segment. The Rieske domain occupies 116 to 212 (AAAWLKTHGP…CDISEEGKVV (97 aa)). [2Fe-2S] cluster contacts are provided by Cys-158, His-160, Cys-176, and His-179. A disulfide bridge connects residues Cys-163 and Cys-178.

This sequence belongs to the Rieske iron-sulfur protein family. In terms of assembly, the 4 large subunits of the cytochrome b6-f complex are cytochrome b6, subunit IV (17 kDa polypeptide, petD), cytochrome f and the Rieske protein, while the 4 small subunits are petG, petL, petM and petN. The complex functions as a dimer. [2Fe-2S] cluster serves as cofactor.

The protein resides in the plastid. It localises to the chloroplast thylakoid membrane. The enzyme catalyses 2 oxidized [plastocyanin] + a plastoquinol + 2 H(+)(in) = 2 reduced [plastocyanin] + a plastoquinone + 4 H(+)(out). In terms of biological role, component of the cytochrome b6-f complex, which mediates electron transfer between photosystem II (PSII) and photosystem I (PSI), cyclic electron flow around PSI, and state transitions. This is Cytochrome b6-f complex iron-sulfur subunit, chloroplastic (petC) from Fritillaria agrestis (Stinkbells).